Consider the following 328-residue polypeptide: Methionyl-tRNA formyltransferase (328 aa).

110–113 (SLLP) is a (6S)-5,6,7,8-tetrahydrofolate binding site.

The protein belongs to the Fmt family.

It catalyses the reaction L-methionyl-tRNA(fMet) + (6R)-10-formyltetrahydrofolate = N-formyl-L-methionyl-tRNA(fMet) + (6S)-5,6,7,8-tetrahydrofolate + H(+). In terms of biological role, attaches a formyl group to the free amino group of methionyl-tRNA(fMet). The formyl group appears to play a dual role in the initiator identity of N-formylmethionyl-tRNA by promoting its recognition by IF2 and preventing the misappropriation of this tRNA by the elongation apparatus. The polypeptide is Methionyl-tRNA formyltransferase (Prochlorococcus marinus subsp. pastoris (strain CCMP1986 / NIES-2087 / MED4)).